A 496-amino-acid polypeptide reads, in one-letter code: Angiopoietin-2 (496 aa).

A signal peptide spans 1–18 (MWQIVFLTFGCDLVLASA). N89, N119, N133, N151, N240, and N304 each carry an N-linked (GlcNAc...) asparagine glycan. Residues 159-256 (QLLQHSISTN…QQHDLMETVN (98 aa)) are a coiled coil. Residues 280–496 (TFRDCAEIFK…TTMMIRPADF (217 aa)) form the Fibrinogen C-terminal domain. Residues C284 and C313 are joined by a disulfide bond. D429, D431, C433, and C435 together coordinate Ca(2+). Disulfide bonds link C433–C435 and C437–C450.

In terms of assembly, interacts with TEK/TIE2, competing for the same binding site as ANGPT1. Interacts with ITGA5. Interacts with SVEP1/polydom. Interacts with THBD; this interaction significantly inhibits the generation of activated PC and TAFIa/CPB2 by the thrombin/thrombomodulin complex.

It localises to the secreted. Functionally, binds to TEK/TIE2, competing for the ANGPT1 binding site, and modulating ANGPT1 signaling. Can induce tyrosine phosphorylation of TEK/TIE2 in the absence of ANGPT1. In the absence of angiogenic inducers, such as VEGF, ANGPT2-mediated loosening of cell-matrix contacts may induce endothelial cell apoptosis with consequent vascular regression. In concert with VEGF, it may facilitate endothelial cell migration and proliferation, thus serving as a permissive angiogenic signal. Involved in the regulation of lymphangiogenesis. The polypeptide is Angiopoietin-2 (Angpt2) (Rattus norvegicus (Rat)).